Reading from the N-terminus, the 664-residue chain is MLTSILIKGRTPVLASRNLLAALSNCNHITWAVSRRLYNDGNRDQRNFGRNQRNNNSNRYRNSRFNSRPRTRSREDDDEVHFDKTTFSKLIHVPKEDNSKEVTLDSLLEEGVLDKEIHKAITRMEFPGLTPVQQKTIKPILSSEDHDVIARAKTGTGKTFAFLIPIFQHLINTKFDSQYMVKAVIVAPTRDLALQIEAEVKKIHDMNYGLKKYACVSLVGGTDFRAAMNKMNKLRPNIVIATPGRLIDVLEKYSNKFFRFVDYKVLDEADRLLEIGFRDDLETISGILNEKNSKSADNIKTLLFSATLDDKVQKLANNIMNKKECLFLDTVDKNEPEAHERIDQSVVISEKFANSIFAAVEHIKKQIKERDSNYKAIIFAPTVKFTSFLCSILKNEFKKDLPILEFHGKITQNKRTSLVKRFKKDESGILVCTDVGARGMDFPNVHEVLQIGVPSELANYIHRIGRTARSGKEGSSVLFICKDELPFVRELEDAKNIVIAKQEKYEPSEEIKSEVLEAVTEEPEDISDIVISLISSYRSCIKEYRFSERRILPEIASTYGVLLNDPQLKIPVSRRFLDKLGLSRSPIGKAMFEIRDYSSRDGNNKSYDYDDDSEISFRGNKNYNNRSQNRDYDDEPFRRSNNNRRSFSRSNDKNNYSSRNSNIY.

The N-terminal 26 residues, 1–26 (MLTSILIKGRTPVLASRNLLAALSNC), are a transit peptide targeting the mitochondrion. Positions 42-79 (NRDQRNFGRNQRNNNSNRYRNSRFNSRPRTRSREDDDE) are disordered. Low complexity predominate over residues 48 to 68 (FGRNQRNNNSNRYRNSRFNSR). The short motif at 106-134 (SLLEEGVLDKEIHKAITRMEFPGLTPVQQ) is the Q motif element. The Helicase ATP-binding domain occupies 139 to 326 (PILSSEDHDV…NNIMNKKECL (188 aa)). 152-159 (AKTGTGKT) lines the ATP pocket. The short motif at 267-270 (DEAD) is the DEAD box element. The 158-residue stretch at 355–512 (SIFAAVEHIK…EKYEPSEEIK (158 aa)) folds into the Helicase C-terminal domain. Residues 602–664 (GNNKSYDYDD…NYSSRNSNIY (63 aa)) form a disordered region. The segment covering 628–638 (QNRDYDDEPFR) has biased composition (basic and acidic residues). Residues 639–649 (RSNNNRRSFSR) are compositionally biased toward low complexity. A compositionally biased stretch (polar residues) spans 653-664 (KNNYSSRNSNIY).

Belongs to the DEAD box helicase family. DDX18/HAS1 subfamily.

It is found in the mitochondrion matrix. It catalyses the reaction ATP + H2O = ADP + phosphate + H(+). In terms of biological role, ATP-dependent RNA helicase required for mitochondrial splicing of group I and II introns. Specifically involved in the ATP-dependent splicing of the bl1 intron of COB. Also required for efficient mitochondrial translation. This is ATP-dependent RNA helicase MSS116, mitochondrial (MSS116) from Saccharomyces cerevisiae (strain ATCC 204508 / S288c) (Baker's yeast).